Consider the following 781-residue polypeptide: Catalase-peroxidase (781 aa).

An N-terminal signal peptide occupies residues 1–20 (MLYIYYLFKSLFFHTLFVFS). Positions 125–272 (WHSAGTYRIG…LAAVQMGLIY (148 aa)) form a cross-link, tryptophyl-tyrosyl-methioninium (Trp-Tyr) (with M-298). The active-site Proton acceptor is His126. The disordered stretch occupies residues 237–256 (VHHPDEHRGAKEKAAKNSDS). The tryptophyl-tyrosyl-methioninium (Tyr-Met) (with W-125) cross-link spans 272 to 298 (YVNPEGPDGRPDPLASARDIRETFARM). His313 provides a ligand contact to heme b. Positions 317–336 (KTHGAAPADNVGPEPEAGEL) are disordered.

This sequence belongs to the peroxidase family. Peroxidase/catalase subfamily. As to quaternary structure, homodimer or homotetramer. It depends on heme b as a cofactor. Formation of the three residue Trp-Tyr-Met cross-link is important for the catalase, but not the peroxidase activity of the enzyme.

The catalysed reaction is H2O2 + AH2 = A + 2 H2O. It carries out the reaction 2 H2O2 = O2 + 2 H2O. In terms of biological role, bifunctional enzyme with both catalase and broad-spectrum peroxidase activity. In Xylella fastidiosa (strain 9a5c), this protein is Catalase-peroxidase.